The primary structure comprises 197 residues: Large ribosomal subunit protein uL11 (197 aa).

This sequence belongs to the universal ribosomal protein uL11 family. Part of the ribosomal stalk of the 50S ribosomal subunit. Interacts with L10 and the large rRNA to form the base of the stalk. L10 forms an elongated spine to which L12 dimers bind in a sequential fashion forming a multimeric L10(L12)X complex. Post-translationally, one or more lysine residues are methylated.

Its function is as follows. Forms part of the ribosomal stalk which helps the ribosome interact with GTP-bound translation factors. This chain is Large ribosomal subunit protein uL11, found in Mycoplasma mobile (strain ATCC 43663 / 163K / NCTC 11711) (Mesomycoplasma mobile).